The following is a 357-amino-acid chain: tRNA pseudouridine synthase Pus10 (357 aa).

The THUMP domain occupies 1–118 (MNLCRECYGI…TFTFELQIRP (118 aa)). Residue D187 is the Nucleophile of the active site. Y251 and Y322 together coordinate substrate.

Belongs to the pseudouridine synthase Pus10 family.

The catalysed reaction is uridine(54) in tRNA = pseudouridine(54) in tRNA. The enzyme catalyses uridine(55) in tRNA = pseudouridine(55) in tRNA. Functionally, responsible for synthesis of pseudouridine from uracil-54 and uracil-55 in the psi GC loop of transfer RNAs. The chain is tRNA pseudouridine synthase Pus10 from Archaeoglobus fulgidus (strain ATCC 49558 / DSM 4304 / JCM 9628 / NBRC 100126 / VC-16).